A 129-amino-acid polypeptide reads, in one-letter code: UPF0344 protein SAR0931 (129 aa).

4 helical membrane-spanning segments follow: residues 1–21 (MLHL…ATYL), 36–56 (LHMV…WILI), 67–87 (MLLT…EVSI), and 99–119 (MFWI…ILPL).

The protein belongs to the UPF0344 family.

It localises to the cell membrane. The sequence is that of UPF0344 protein SAR0931 from Staphylococcus aureus (strain MRSA252).